Reading from the N-terminus, the 75-residue chain is Small ribosomal subunit protein bS18 (75 aa).

This sequence belongs to the bacterial ribosomal protein bS18 family. In terms of assembly, part of the 30S ribosomal subunit. Forms a tight heterodimer with protein bS6.

Binds as a heterodimer with protein bS6 to the central domain of the 16S rRNA, where it helps stabilize the platform of the 30S subunit. The chain is Small ribosomal subunit protein bS18 from Acinetobacter baylyi (strain ATCC 33305 / BD413 / ADP1).